Here is a 706-residue protein sequence, read N- to C-terminus: MTEITAEGNASTTTTVIDSKNGSVPKSPGKVLKRTVTEDLVTTFSSPAAWLLVIALIITWSAVAVVMFDLVDYKNFSASSIAKMGSDPLKLVHDAVEETTDWIYGFFSLLSDIISSDGDEEDDEGDEDTAKGEIEEPPLKRKDIHKEKIEKQEKPERKIPTKVVHKEKEKEKEKVKEKEKPEKKATHKEKLEKKEKPETKTVTKEEKKARTKEKIEEKTKKEVKGVKQEKVKQTVAKAKEVQKTPKPKEKESKETAAVSKQEQKDQYAFCRYMIDIFVHGDLKPGQSPAIPPPSPTEQASRPTPALPTPEEKEGEKKKAEKKVTTETKKKAEKEDAKKKSEKETDIDMKKKEPGKSPDTKPGTVKVTTQAATKKDEKKEDSKKAKKPAEEQPKGKKQEKKEKHEEPAKSTKKEHAAPSEKQAKAKIERKEEVSAASTKKAVPAKKEEKTTKTVEQETRKEKPGKISSVLKDKELTKEKEVKVPASLKEKGSETKKDEKTSKPEPQIKKEEKPGKEVKPKPPQPQIKKEEKPEQDIMKPEKTALHGKPEEKVLKQVKAVTTEKHVKPKPAKKAEHQEKEPPSIKTDKPKSTSKGMPEVTESGKKKIEKSEKEIKVPARRESHQLQNVTKAEKPARGSKEGFEDVPASKKAKEEAEEVSSTKKQKSPISFFQCVYLDGYNGYGFQFPVTPAQYPGESSGKPNSPGPKQ.

Residues 1–28 (MTEITAEGNASTTTTVIDSKNGSVPKSP) are disordered. Over 1-47 (MTEITAEGNASTTTTVIDSKNGSVPKSPGKVLKRTVTEDLVTTFSSP) the chain is Cytoplasmic. Residues 8–24 (GNASTTTTVIDSKNGSV) are compositionally biased toward polar residues. The helical transmembrane segment at 48–68 (AAWLLVIALIITWSAVAVVMF) threads the bilayer. The Lumenal segment spans residues 69–706 (DLVDYKNFSA…GKPNSPGPKQ (638 aa)). N-linked (GlcNAc...) asparagine glycosylation is present at asparagine 75. Residues 117–127 (DGDEEDDEGDE) show a composition bias toward acidic residues. Disordered regions lie at residues 117 to 265 (DGDE…EQKD), 281 to 663 (DLKP…KKQK), and 684 to 706 (FPVTPAQYPGESSGKPNSPGPKQ). Composition is skewed to basic and acidic residues over residues 128–254 (DTAK…ESKE), 309–358 (PEEK…KSPD), 372–432 (TKKD…KEEV), 443–518 (AKKE…EVKP), 525–552 (IKKEEKPEQDIMKPEKTALHGKPEEKVL), 570–588 (KKAEHQEKEPPSIKTDKPK), and 599–621 (ESGKKKIEKSEKEIKVPARRESH). Asparagine 625 carries N-linked (GlcNAc...) asparagine glycosylation. Residues 628-651 (KAEKPARGSKEGFEDVPASKKAKE) are compositionally biased toward basic and acidic residues.

As to quaternary structure, interacts with CASQ2. Homooligomer of variable subunit number; disulfide-linked. Interacts with CASQ1 and RYR1 in skeletal muscle. Post-translationally, phosphorylated by CaMK2. N-glycosylated. As to expression, detected in skeletal muscle and in heart (at protein level). Detected in skeletal muscle and in heart.

It localises to the sarcoplasmic reticulum membrane. Its function is as follows. Contributes to the regulation of lumenal Ca2+ release via the sarcoplasmic reticulum calcium release channels RYR1 and RYR2, a key step in triggering skeletal and heart muscle contraction. Required for normal organization of the triad junction, where T-tubules and the sarcoplasmic reticulum terminal cisternae are in close contact. Required for normal skeletal muscle strength. Plays a role in excitation-contraction coupling in the heart and in regulating the rate of heart beats. In Oryctolagus cuniculus (Rabbit), this protein is Triadin (TRDN).